Here is a 232-residue protein sequence, read N- to C-terminus: DOA4-independent degradation protein 4 (232 aa).

Residues 14–97 adopt a coiled-coil conformation; it reads PQERLKKNQR…AISLRIQAVR (84 aa). The interaction with VPS4 stretch occupies residues 183–232; the sequence is LQSTPQNLVSNAPIAETAMGIPEPIGAGSEFHGNPDDDLQARLNTLKKQT. Residues 203–232 are disordered; that stretch reads IPEPIGAGSEFHGNPDDDLQARLNTLKKQT. The MIT-interacting motif signature appears at 219–229; that stretch reads DDLQARLNTLK.

The protein belongs to the SNF7 family. As to quaternary structure, core component of the ESCRT-III complex (endosomal sorting required for transport complex III). ESCRT-III appears to be sequentially assembled as a flat lattice on the endosome membrane and forms a transient 450 kDa complex that contains DID4, oligomerized SNF7, VPS20 and VPS24. SNF7 oligomerization into a membrane-associated filament is nucleated by association of SNF7 with VPS20; the process is terminated through association of VPS24, possibly by capping the SNF7 filament. VPS24 subsequently associates with DID4/VPS2.

The protein localises to the cytoplasm. Its subcellular location is the endosome membrane. Required for the sorting and concentration of proteins resulting in the entry of these proteins into the invaginating vesicles of the multivesicular body (MVB). Acts a component of the ESCRT-III complex, which appears to be critical for late steps in MVB sorting, such as membrane invagination and final cargo sorting and recruitment of late-acting components of the sorting machinery. The MVB pathway requires the sequential function of ESCRT-O, -I,-II and -III complex assemblies. Can directly stimulate VPS4 ATPase activity. The DID4/VPS2-VPS24 subcomplex is required for the VPS4-dependent dissociation of ESCRT-III. This is DOA4-independent degradation protein 4 (DID4) from Saccharomyces cerevisiae (strain ATCC 204508 / S288c) (Baker's yeast).